A 260-amino-acid chain; its full sequence is Sugar fermentation stimulation protein homolog (260 aa).

This sequence belongs to the SfsA family.

The chain is Sugar fermentation stimulation protein homolog from Chloroflexus aggregans (strain MD-66 / DSM 9485).